The primary structure comprises 493 residues: NADH-ubiquinone oxidoreductase 51 kDa subunit, mitochondrial (493 aa).

The N-terminal 27 residues, 1–27, are a transit peptide targeting the mitochondrion; the sequence is MLSRTAAPTKASARTLSRAAAEQCRTF. 96–105 contacts NAD(+); the sequence is GRGGAGFPSG. 212-259 serves as a coordination point for FMN; sequence GAGAYVCGEETSLIESLEGKPGKPRLKPPFPAAVGLFGCPSTVANVET. [4Fe-4S] cluster is bound by residues Cys391, Cys394, Cys397, and Cys437.

The protein belongs to the complex I 51 kDa subunit family. Complex I is composed of about 40 different subunits. This is a component of the flavoprotein-sulfur (FP) fragment of the enzyme. FMN is required as a cofactor. The cofactor is [4Fe-4S] cluster.

It localises to the mitochondrion inner membrane. It carries out the reaction a ubiquinone + NADH + 5 H(+)(in) = a ubiquinol + NAD(+) + 4 H(+)(out). Its function is as follows. Core subunit of the mitochondrial membrane respiratory chain NADH dehydrogenase (Complex I) that is believed to belong to the minimal assembly required for catalysis. Complex I functions in the transfer of electrons from NADH to the respiratory chain. The immediate electron acceptor for the enzyme is believed to be ubiquinone. The protein is NADH-ubiquinone oxidoreductase 51 kDa subunit, mitochondrial (nuo-51) of Neurospora crassa (strain ATCC 24698 / 74-OR23-1A / CBS 708.71 / DSM 1257 / FGSC 987).